We begin with the raw amino-acid sequence, 233 residues long: Ion-translocating oxidoreductase complex subunit E (233 aa).

6 consecutive transmembrane segments (helical) span residues 18–38 (ALVQLLGLCPLLAVSSTATNA), 39–59 (LGLGLATTLVLVCTNTAVSAL), 69–89 (IPIYVMIIASVVSTVQMLINA), 92–112 (FGLYQSLGIFIPLIVTNCIVI), 128–148 (ALDGFAMGMGATCALFVLGAL), and 182–202 (PFLLAMLPPGAFIGLGLLLAG).

The protein belongs to the NqrDE/RnfAE family. In terms of assembly, the complex is composed of six subunits: RnfA, RnfB, RnfC, RnfD, RnfE and RnfG.

The protein localises to the cell inner membrane. Functionally, part of a membrane-bound complex that couples electron transfer with translocation of ions across the membrane. In Yersinia pestis bv. Antiqua (strain Angola), this protein is Ion-translocating oxidoreductase complex subunit E.